A 529-amino-acid polypeptide reads, in one-letter code: Low affinity inorganic phosphate transporter 4 (529 aa).

Residues 1–21 (MASDNLVVLNALDTARTQWYH) lie on the Cytoplasmic side of the membrane. A helical membrane pass occupies residues 22 to 42 (VTAVIIAGMGFFTDAYDLFCI). The Extracellular portion of the chain corresponds to 43 to 71 (STVSKLLGRLYYYDPSTKAPGKLPHMANN). Residues 72 to 92 (WVIGVALVGTLSGQLVFGWLG) traverse the membrane as a helical segment. At 93–99 (DKLGRKK) the chain is on the cytoplasmic side. Residues 100-120 (VYGLTLILMVICALCSGLSLG) traverse the membrane as a helical segment. The Extracellular segment spans residues 121-125 (YSPKS). The helical transmembrane segment at 126-146 (VIGTLCFFRFWLGFGIGGDYP) threads the bilayer. At 147–161 (LSATIMSEYANKSTR) the chain is on the cytoplasmic side. A helical membrane pass occupies residues 162–182 (GAFIAAVFAMQGVGIIFAGLV). Residues 183 to 211 (SMTISKVFLMNFEGKPFNVDEVLSTEPEA) lie on the Extracellular side of the membrane. A helical membrane pass occupies residues 212 to 232 (DYVWRIVLMLGALPALLTYYW). Over 233–291 (RMKMPETGRYTAIIEGNAKQAAIDMGKVLDIEIQAEGDKLAQFKAANEYSLLSNEFFQR) the chain is Cytoplasmic. The helical transmembrane segment at 292-312 (HGLHLIGTMSTWFLLDIAFYS) threads the bilayer. Topologically, residues 313-344 (QNLTQKDIFPVMGLTSKANTISALREMFETSR) are extracellular. A glycan (N-linked (GlcNAc...) asparagine) is linked at asparagine 314. The chain crosses the membrane as a helical span at residues 345–365 (AMFVIALFGTFPGYWFTVFFI). The Cytoplasmic segment spans residues 366–374 (EKIGRFKIQ). Residues 375-395 (LVGFFMMSVFMAIIGVKYDYL) traverse the membrane as a helical segment. The Extracellular portion of the chain corresponds to 396 to 405 (RNKEHKWTFA). Residues 406-426 (ALYGLTFFFANFGPNSTTFVL) form a helical membrane-spanning segment. Residues 427 to 437 (PAELFPTRVRS) are Cytoplasmic-facing. Residues 438 to 458 (TCHALSAALGKAGAMISAFGI) traverse the membrane as a helical segment. The Extracellular portion of the chain corresponds to 459–471 (QQYTQDQDVRKIK). The chain crosses the membrane as a helical span at residues 472–492 (TAMLLLAFTNMVGFCCTFLVT). The Cytoplasmic portion of the chain corresponds to 493–529 (ETKGRSLEEISGEDGRQNETQMKTTRPVSGHPDDGWE). Residues 501–529 (EISGEDGRQNETQMKTTRPVSGHPDDGWE) are disordered. Residues 510–519 (NETQMKTTRP) show a composition bias toward polar residues.

The protein belongs to the major facilitator superfamily. Phosphate:H(+) symporter (TC 2.A.1.9) family.

It is found in the cell membrane. It catalyses the reaction phosphate(in) + H(+)(in) = phosphate(out) + H(+)(out). Functionally, low-affinity transporter for external inorganic phosphate (Pi) probably involved in the acquisition of phosphate released by arbuscular mycorrhizal (AM) fungi (e.g. Rhizophagus irregularis and Glomus intraradices) during AM symbiosis. Acts as a Pi-sensing machinery at the root tip level, independently of AM fungi, involved in the regulation of early root branching and lateral roots formation. In Petunia hybrida (Petunia), this protein is Low affinity inorganic phosphate transporter 4.